A 611-amino-acid chain; its full sequence is Adenosylhomocysteinase 3 (611 aa).

Low complexity-rich tracts occupy residues 1–14, 40–57, and 68–78; these read MSVQ…AAKV, AMAP…APAA, and GPAAALSPAAG. The interval 1–184 is disordered; it reads MSVQVVSAAA…KQQKNSKGNS (184 aa). Residue S2 is modified to N-acetylserine. Residues 2-109 form an LISN domain, inhibits interaction with ITPR1 region; it reads SVQVVSAAAA…DGGEALVSPD (108 aa). Residue S107 is modified to Phosphoserine. A compositionally biased stretch (basic residues) spans 135-144; the sequence is RPTKIGRRSL. A compositionally biased stretch (low complexity) spans 145 to 164; sequence SRSISQSSTDSYSSAASYTD. Residues S149, S152, S155, and S158 each carry the phosphoserine modification. The substrate site is built by T236, D310, and E335. 336–338 lines the NAD(+) pocket; sequence SVT. 2 residues coordinate substrate: K365 and D369. NAD(+) contacts are provided by residues N370, 401-406, E422, N457, 478-479, and N525; these read GEVGKG and MG.

This sequence belongs to the adenosylhomocysteinase family. In terms of assembly, homotetramer. Forms heteromultimers with AHCYL1 (via the C-terminal region). Interacts with ITPR1; with lower affinity than AHCYL1 and maybe via ITPR1. Interacts with SLC4A4. Interacts with ZCCHC4. NAD(+) is required as a cofactor. Post-translationally, phosphorylated during neuronal differentiation at the LISN domain. As to expression, expressed in parotid and acinar cells (at protein level).

It localises to the cytoplasm. It is found in the microsome. It catalyses the reaction S-adenosyl-L-homocysteine + H2O = L-homocysteine + adenosine. Its pathway is amino-acid biosynthesis; L-homocysteine biosynthesis; L-homocysteine from S-adenosyl-L-homocysteine: step 1/1. Its function is as follows. May regulate the electrogenic sodium/bicarbonate cotransporter SLC4A4 activity and Mg(2+)-sensitivity. On the contrary of its homolog AHCYL1, does not regulate ITPR1 sensitivity to inositol 1,4,5-trisphosphate. This is Adenosylhomocysteinase 3 from Bos taurus (Bovine).